The chain runs to 414 residues: Sensor protein CutS (414 aa).

The segment covering 1–15 (MATTPAPPGAPPKPT) has biased composition (pro residues). The disordered stretch occupies residues 1–21 (MATTPAPPGAPPKPTWDPRSA). 2 helical membrane passes run 37 to 57 (LLYG…IYLL) and 121 to 141 (SLLA…AMAG). The region spanning 142-194 (RVLSPLGRITRTARAVAGSDLSRRIELDGPDDELKELADTFDDMLERLQRAFT) is the HAMP domain. The region spanning 202–414 (NASHELRTPL…GLVMRVTLPV (213 aa)) is the Histidine kinase domain. At histidine 205 the chain carries Phosphohistidine; by autocatalysis.

The protein localises to the cell membrane. The catalysed reaction is ATP + protein L-histidine = ADP + protein N-phospho-L-histidine.. Its function is as follows. Member of the two-component regulatory system CutS/CutR, involved in the regulation of copper metabolism. The sequence is that of Sensor protein CutS (cutS) from Streptomyces coelicolor (strain ATCC BAA-471 / A3(2) / M145).